We begin with the raw amino-acid sequence, 312 residues long: Putative pyridoxal kinase BUD16 (312 aa).

Substrate-binding residues include Ser-9, Thr-44, and Tyr-122. ATP-binding positions include 183–184 (TS) and 211–223 (RVPF…TGVG). Asp-224 lines the substrate pocket.

The protein belongs to the pyridoxine kinase family. A divalent metal cation is required as a cofactor.

The protein localises to the cytoplasm. The protein resides in the nucleus. The catalysed reaction is pyridoxal + ATP = pyridoxal 5'-phosphate + ADP + H(+). Functionally, required for synthesis of pyridoxal-5-phosphate from vitamin B6. Important for bud site selection. This Saccharomyces cerevisiae (strain ATCC 204508 / S288c) (Baker's yeast) protein is Putative pyridoxal kinase BUD16 (BUD16).